The chain runs to 222 residues: Large ribosomal subunit protein uL4 (222 aa).

Positions 42–100 (AAGRQGTHSTKTRGEVRGGGKKPYRQKGTGRARQGSVRAPQFTGGGTVHGPKPRDYAQR) are disordered. Over residues 60-71 (GGKKPYRQKGTG) the composition is skewed to basic residues.

Belongs to the universal ribosomal protein uL4 family. In terms of assembly, part of the 50S ribosomal subunit.

Its function is as follows. One of the primary rRNA binding proteins, this protein initially binds near the 5'-end of the 23S rRNA. It is important during the early stages of 50S assembly. It makes multiple contacts with different domains of the 23S rRNA in the assembled 50S subunit and ribosome. In terms of biological role, forms part of the polypeptide exit tunnel. This chain is Large ribosomal subunit protein uL4, found in Thermobifida fusca (strain YX).